Here is a 299-residue protein sequence, read N- to C-terminus: Xyloglucan endotransglucosylase protein 6 (299 aa).

Positions 1-25 are cleaved as a signal peptide; the sequence is MASSLTLPMAMAFTLLALSFASAMG. The GH16 domain occupies 26-219; the sequence is GSMNSSRFDE…WSHAPFVASY (194 aa). Catalysis depends on E105, which acts as the Nucleophile. The active-site Proton donor is the E109. E109 contacts xyloglucan. A glycan (N-linked (GlcNAc...) asparagine) is linked at N113. Xyloglucan is bound by residues 122-124, 132-134, 198-199, and G203; these read QTN, NRE, and DW. 2 disulfides stabilise this stretch: C227–C242 and C281–C294. R286 serves as a coordination point for xyloglucan.

The protein belongs to the glycosyl hydrolase 16 family. XTH group 1 subfamily. In terms of processing, contains at least one intrachain disulfide bond essential for its enzymatic activity. As to expression, highest expression in ripe leaves after full expansion. Also expressed in fruits, and at a lower level in flowers and stems (picked at anthesis).

The protein localises to the secreted. It is found in the cell wall. It localises to the extracellular space. The protein resides in the apoplast. The catalysed reaction is breaks a beta-(1-&gt;4) bond in the backbone of a xyloglucan and transfers the xyloglucanyl segment on to O-4 of the non-reducing terminal glucose residue of an acceptor, which can be a xyloglucan or an oligosaccharide of xyloglucan.. In terms of biological role, catalyzes xyloglucan endotransglycosylation (XET). Cleaves and religates xyloglucan polymers. Does not catalyze xyloglucan endohydrolysis (XEH). Probably involved in cell wall restructuring during postharvest fruit softening. This is Xyloglucan endotransglucosylase protein 6 from Diospyros kaki (Kaki persimmon).